Consider the following 457-residue polypeptide: Proton extrusion protein PxcA (457 aa).

4 helical membrane passes run 239–259 (FILL…TFFL), 332–352 (INAI…GVVI), 368–390 (GILY…DMFV), and 417–437 (FNFL…KYWI).

It belongs to the CemA family.

It localises to the cell inner membrane. In terms of biological role, required for H(+) efflux immediately after light irradiation to form a rapid H(+) concentration gradient across the thylakoid membranes. Together with PxcL, contributes to transient H(+) uptake following dark to light transition. This Gloeothece citriformis (strain PCC 7424) (Cyanothece sp. (strain PCC 7424)) protein is Proton extrusion protein PxcA.